The sequence spans 296 residues: Glycine N-acyltransferase (296 aa).

Lys-16 is modified (N6-acetyllysine; alternate). The residue at position 16 (Lys-16) is an N6-succinyllysine; alternate. Lys-113 is modified (N6-acetyllysine). N6-acetyllysine; alternate is present on residues Lys-127 and Lys-142. N6-succinyllysine; alternate is present on residues Lys-127 and Lys-142. At Lys-159 the chain carries N6-acetyllysine. The residue at position 169 (Lys-169) is an N6-succinyllysine. Lys-183 and Lys-256 each carry N6-acetyllysine; alternate. 2 positions are modified to N6-succinyllysine; alternate: Lys-183 and Lys-256. Lys-267 carries the N6-succinyllysine modification.

The protein belongs to the glycine N-acyltransferase family.

It is found in the mitochondrion. The enzyme catalyses an acyl-CoA + glycine = an N-acylglycine + CoA + H(+). It carries out the reaction benzoyl-CoA + glycine = N-benzoylglycine + CoA + H(+). Mitochondrial acyltransferase which transfers an acyl group to the N-terminus of glycine and glutamine, although much less efficiently. Can conjugate a multitude of substrates to form a variety of N-acylglycines, thereby detoxify xenobiotics, such as benzoic acid or salicylic acid, and endogenous organic acids, such as isovaleric acid. This chain is Glycine N-acyltransferase (Glyat), found in Rattus norvegicus (Rat).